The sequence spans 589 residues: MTVLGHPRSWSCHCLPVLILLLGIGHGPRVEGVTHYKPGDPVILYVNKVGPYHNPQETYHYYQLPVCCPEKIRHKSLSLGEVLDGDRMAESLYEIRFRENVEKRILCHMQLSSAQVEQLRQAIEELYYFEFVVDDLPIRGFVGYMEESGFLPHSHKIGLWTHLDFHLEFHGDRIIFANVSVRDVKPHSLDGLRSDELLGLTHTYSVRWSETSVEHRSDRRRADDGGFFPRTLEIHWLSIINSMVLVFLLVGFVAVILMRVLRNDLARYNLDEETSSGGSSDDFDQGDNGWKIIHTDVFRFPPCRGLLCAVLGVGAQFLALGTGIIVMALLGMFNVHRHGAINSAAILLYALTCCISGYVSSHFYRQIGGERWVWNIILTTSLFSVPFFLTWSVVNSVHWANGSTQALPVTTILLLLTVWLLVGFPLTVIGGIFGKNNASPFDAPCRTKNIAREIPPQPCAISVELYYIFATVWGREQYTLYGILFFVFAILLSVGACISIALTYFQLSGEDYRWWWRSVLSVGSTGLFIFLYSVFYYARRSNMSGAVQTVEFFGYSLLTGYVFFLMLGTISFFSSLKFIRYIYVNLKMD.

A signal peptide spans 1 to 27 (MTVLGHPRSWSCHCLPVLILLLGIGHG). N178 carries an N-linked (GlcNAc...) asparagine glycan. Transmembrane regions (helical) follow at residues 237–257 (LSIINSMVLVFLLVGFVAVIL), 310–330 (VLGVGAQFLALGTGIIVMALL), 339–359 (GAINSAAILLYALTCCISGYV), and 373–393 (VWNIILTTSLFSVPFFLTWSV). N-linked (GlcNAc...) asparagine glycosylation is present at N401. The next 3 helical transmembrane spans lie at 412–432 (ILLLLTVWLLVGFPLTVIGGI), 482–502 (GILFFVFAILLSVGACISIAL), and 518–538 (SVLSVGSTGLFIFLYSVFYYA). N542 carries an N-linked (GlcNAc...) asparagine glycan. A helical transmembrane segment spans residues 552–572 (FFGYSLLTGYVFFLMLGTISF).

The protein belongs to the nonaspanin (TM9SF) (TC 9.A.2) family.

It is found in the lysosome membrane. The protein localises to the cytoplasmic vesicle. Its subcellular location is the autophagosome membrane. Its function is as follows. Plays an essential role in autophagy. In Rattus norvegicus (Rat), this protein is Transmembrane 9 superfamily member 1 (Tm9sf1).